The primary structure comprises 558 residues: Dihydroxy-acid dehydratase (558 aa).

D78 is a binding site for Mg(2+). [2Fe-2S] cluster is bound at residue C119. Mg(2+) is bound by residues D120 and K121. Residue K121 is modified to N6-carboxylysine. C192 is a binding site for [2Fe-2S] cluster. E446 serves as a coordination point for Mg(2+). S472 functions as the Proton acceptor in the catalytic mechanism.

The protein belongs to the IlvD/Edd family. In terms of assembly, homodimer. [2Fe-2S] cluster is required as a cofactor. It depends on Mg(2+) as a cofactor.

The catalysed reaction is (2R)-2,3-dihydroxy-3-methylbutanoate = 3-methyl-2-oxobutanoate + H2O. The enzyme catalyses (2R,3R)-2,3-dihydroxy-3-methylpentanoate = (S)-3-methyl-2-oxopentanoate + H2O. It participates in amino-acid biosynthesis; L-isoleucine biosynthesis; L-isoleucine from 2-oxobutanoate: step 3/4. The protein operates within amino-acid biosynthesis; L-valine biosynthesis; L-valine from pyruvate: step 3/4. Functions in the biosynthesis of branched-chain amino acids. Catalyzes the dehydration of (2R,3R)-2,3-dihydroxy-3-methylpentanoate (2,3-dihydroxy-3-methylvalerate) into 2-oxo-3-methylpentanoate (2-oxo-3-methylvalerate) and of (2R)-2,3-dihydroxy-3-methylbutanoate (2,3-dihydroxyisovalerate) into 2-oxo-3-methylbutanoate (2-oxoisovalerate), the penultimate precursor to L-isoleucine and L-valine, respectively. In Campylobacter jejuni subsp. jejuni serotype O:23/36 (strain 81-176), this protein is Dihydroxy-acid dehydratase.